The primary structure comprises 513 residues: MSYHSFQPGSRCGSQSFSSYSAVMPRMVTHYAVSKGPCRPGGGRGLRALGCLGSRSLCNVGFGRPRVASRCGGTLPGFGYRLGATCGPSACITPVTINESLLVPLALEIDPTVQRVKRDEKEQIKCLNNRFASFINKVRFLEQKNKLLETKWNFMQQQRCCQTNIEPIFEGYISALRRQLDCVSGDRVRLESELCSLQAALEGYKKKYEEELSLRPCVENEFVALKKDVDTAFLMKADLETNAEALVQEIDFLKSLYEEEICLLQSQISETSVIVKMDNSRELDVDGIIAEIKAQYDDIASRSKAEAEAWYQCRYEELRVTAGNHCDNLRNRKNEILEMNKLIQRLQQETENVKAQRCKLEGAIAEAEQQGEAALNDAKCKLAGLEEALQKAKQDMACLLKEYQEVMNSKLGLDIEIATYRRLLEGEEHRLCEGIGPVNISVSSSKGAFLYEPCGVSTPVLSTGVLRSNGGCSIVGTGELYVPCEPQGLLSCGSGRKSSMTLGAGGSSPSHKH.

The interval 1–120 is head; that stretch reads MSYHSFQPGS…PTVQRVKRDE (120 aa). Positions 120-431 constitute an IF rod domain; that stretch reads EKEQIKCLNN…RLLEGEEHRL (312 aa). Residues 121 to 155 are coil 1A; that stretch reads KEQIKCLNNRFASFINKVRFLEQKNKLLETKWNFM. Residues 156–165 form a linker 1 region; the sequence is QQQRCCQTNI. The coil 1B stretch occupies residues 166–266; sequence EPIFEGYISA…YEEEICLLQS (101 aa). Positions 267–283 are linker 12; the sequence is QISETSVIVKMDNSREL. The tract at residues 284–427 is coil 2; sequence DVDGIIAEIK…ATYRRLLEGE (144 aa). The interval 428-513 is tail; the sequence is EHRLCEGIGP…AGGSSPSHKH (86 aa).

Belongs to the intermediate filament family. Heterotetramer of two type I and two type II keratins.

This is Keratin, type II cuticular Hb2 (KRT82) from Homo sapiens (Human).